The primary structure comprises 231 residues: NADH-ubiquinone oxidoreductase chain 4 (231 aa).

Helical transmembrane passes span Pro1–Ile21, Met34–Leu54, Ile63–Gly85, Ala89–Tyr111, Ile128–Pro148, and Thr169–Leu189.

It belongs to the complex I subunit 4 family.

It localises to the mitochondrion membrane. The catalysed reaction is a ubiquinone + NADH + 5 H(+)(in) = a ubiquinol + NAD(+) + 4 H(+)(out). Functionally, core subunit of the mitochondrial membrane respiratory chain NADH dehydrogenase (Complex I) that is believed to belong to the minimal assembly required for catalysis. Complex I functions in the transfer of electrons from NADH to the respiratory chain. The immediate electron acceptor for the enzyme is believed to be ubiquinone. This is NADH-ubiquinone oxidoreductase chain 4 (MT-ND4) from Bothrocophias hyoprora (Amazonian hognose viper).